The sequence spans 220 residues: Probable transaldolase (220 aa).

Catalysis depends on Lys-87, which acts as the Schiff-base intermediate with substrate.

Belongs to the transaldolase family. Type 3B subfamily.

Its subcellular location is the cytoplasm. The enzyme catalyses D-sedoheptulose 7-phosphate + D-glyceraldehyde 3-phosphate = D-erythrose 4-phosphate + beta-D-fructose 6-phosphate. Its pathway is carbohydrate degradation; pentose phosphate pathway; D-glyceraldehyde 3-phosphate and beta-D-fructose 6-phosphate from D-ribose 5-phosphate and D-xylulose 5-phosphate (non-oxidative stage): step 2/3. In terms of biological role, transaldolase is important for the balance of metabolites in the pentose-phosphate pathway. This Porphyromonas gingivalis (strain ATCC 33277 / DSM 20709 / CIP 103683 / JCM 12257 / NCTC 11834 / 2561) protein is Probable transaldolase.